We begin with the raw amino-acid sequence, 344 residues long: 4-hydroxy-3-methylbut-2-en-1-yl diphosphate synthase (flavodoxin) (344 aa).

[4Fe-4S] cluster-binding residues include Cys-253, Cys-256, Cys-288, and Glu-295.

The protein belongs to the IspG family. [4Fe-4S] cluster serves as cofactor.

It catalyses the reaction (2E)-4-hydroxy-3-methylbut-2-enyl diphosphate + oxidized [flavodoxin] + H2O + 2 H(+) = 2-C-methyl-D-erythritol 2,4-cyclic diphosphate + reduced [flavodoxin]. Its pathway is isoprenoid biosynthesis; isopentenyl diphosphate biosynthesis via DXP pathway; isopentenyl diphosphate from 1-deoxy-D-xylulose 5-phosphate: step 5/6. Functionally, converts 2C-methyl-D-erythritol 2,4-cyclodiphosphate (ME-2,4cPP) into 1-hydroxy-2-methyl-2-(E)-butenyl 4-diphosphate. This chain is 4-hydroxy-3-methylbut-2-en-1-yl diphosphate synthase (flavodoxin), found in Thermotoga petrophila (strain ATCC BAA-488 / DSM 13995 / JCM 10881 / RKU-1).